The chain runs to 203 residues: Large ribosomal subunit protein bL25 (203 aa).

This sequence belongs to the bacterial ribosomal protein bL25 family. CTC subfamily. Part of the 50S ribosomal subunit; part of the 5S rRNA/L5/L18/L25 subcomplex. Contacts the 5S rRNA. Binds to the 5S rRNA independently of L5 and L18.

Functionally, this is one of the proteins that binds to the 5S RNA in the ribosome where it forms part of the central protuberance. This chain is Large ribosomal subunit protein bL25, found in Dechloromonas aromatica (strain RCB).